The chain runs to 98 residues: NADH-ubiquinone oxidoreductase chain 4L (98 aa).

3 helical membrane-spanning segments follow: residues 1–21, 29–49, and 61–81; these read MPYIYMNITLAFVISLIGTLM, SLLCLEGMMLSLFTLNALLSL, and LILLVFAACEAAVGLALLVMI.

Belongs to the complex I subunit 4L family. Core subunit of respiratory chain NADH dehydrogenase (Complex I) which is composed of 45 different subunits.

The protein localises to the mitochondrion inner membrane. It catalyses the reaction a ubiquinone + NADH + 5 H(+)(in) = a ubiquinol + NAD(+) + 4 H(+)(out). Core subunit of the mitochondrial membrane respiratory chain NADH dehydrogenase (Complex I) which catalyzes electron transfer from NADH through the respiratory chain, using ubiquinone as an electron acceptor. Part of the enzyme membrane arm which is embedded in the lipid bilayer and involved in proton translocation. The protein is NADH-ubiquinone oxidoreductase chain 4L (MT-ND4L) of Loxodonta africana (African elephant).